The sequence spans 24 residues: MAPRGFSCLLLSTSEIDLPVKRRT.

This sequence belongs to the humanin family. In terms of tissue distribution, highly expressed in the kidney, heart muscle and testis.

The protein resides in the secreted. Its subcellular location is the cytoplasm. Its function is as follows. Plays a role as a neuroprotective and antiapoptotic factor. The chain is Humanin-like 1 from Homo sapiens (Human).